Reading from the N-terminus, the 98-residue chain is Large ribosomal subunit protein uL23 (98 aa).

This sequence belongs to the universal ribosomal protein uL23 family. In terms of assembly, part of the 50S ribosomal subunit. Contacts protein L29, and trigger factor when it is bound to the ribosome.

Functionally, one of the early assembly proteins it binds 23S rRNA. One of the proteins that surrounds the polypeptide exit tunnel on the outside of the ribosome. Forms the main docking site for trigger factor binding to the ribosome. The sequence is that of Large ribosomal subunit protein uL23 from Streptococcus gordonii (strain Challis / ATCC 35105 / BCRC 15272 / CH1 / DL1 / V288).